The sequence spans 67 residues: Large ribosomal subunit protein eL24 (67 aa).

Residues Cys7, Cys10, Cys33, and Cys37 each contribute to the Zn(2+) site. A C4-type zinc finger spans residues 7-37 (CSYCGKPFEPGTGKMFVRNDGRVLFFCSRKC).

Belongs to the eukaryotic ribosomal protein eL24 family. In terms of assembly, part of the 50S ribosomal subunit. Forms a cluster with proteins L3 and L14. It depends on Zn(2+) as a cofactor.

In terms of biological role, binds to the 23S rRNA. This is Large ribosomal subunit protein eL24 from Pyrococcus abyssi (strain GE5 / Orsay).